The sequence spans 153 residues: Small ribosomal subunit protein uS15 (153 aa).

Belongs to the universal ribosomal protein uS15 family. In terms of assembly, part of the 30S ribosomal subunit.

The polypeptide is Small ribosomal subunit protein uS15 (Sulfolobus acidocaldarius (strain ATCC 33909 / DSM 639 / JCM 8929 / NBRC 15157 / NCIMB 11770)).